Consider the following 154-residue polypeptide: AP-1 complex subunit sigma-3 (154 aa).

The protein belongs to the adaptor complexes small subunit family. In terms of assembly, adaptor protein complex 1 (AP-1) is a heterotetramer composed of two large adaptins (gamma-type subunit AP1G1 and beta-type subunit AP1B1), a medium adaptin (mu-type subunit AP1M1 or AP1M2) and a small adaptin (sigma-type subunit AP1S1 or AP1S2 or AP1S3). As to expression, widely expressed.

Its subcellular location is the golgi apparatus. It is found in the cytoplasmic vesicle membrane. The protein resides in the membrane. The protein localises to the clathrin-coated pit. Subunit of clathrin-associated adaptor protein complex 1 that plays a role in protein sorting in the late-Golgi/trans-Golgi network (TGN) and/or endosomes. The AP complexes mediate both the recruitment of clathrin to membranes and the recognition of sorting signals within the cytosolic tails of transmembrane cargo molecules. Involved in TLR3 trafficking. This chain is AP-1 complex subunit sigma-3 (AP1S3), found in Homo sapiens (Human).